We begin with the raw amino-acid sequence, 597 residues long: MPFRELADTFERIEIITSRTQMTVLLVNLFKKTPPEIIDKVVYLLQGRLWPDWKGLPELGVGEKMLIKAIALATQSTESEVESLYKSLGDLGKAAEKLKAIYEEKLKKGAMSILAFVPVKRELTVSQVYETLSRVALATGEGSRDIKLKLLAGLLSDASPKEAKYIIRFVEGRLRLGIGDATIMDALAIVYGGGAHARPIVERAYNLRADLGHIAKILATQGLNALKGIKPQVGIPIRPMLAERLNNPVEILKKVGGIAFVEYKYDGERAQIHKLGDKIWIYSRRLENITHQYPDVVDYARKYIKANEAIVEGEIVAYDPDTGELRPFQELMHRKRKHDIHIAIKEVPVKVYLFDLLYVDGEDYTLKPLPERRAKLVEIIEQTETFQIAEYIRTNNPDELEKFFLKAIEDGAEGVMIKALHKNAIYQAGTRGWLWIKYKRDYKSEMIDTVDLVVIGAFYGRGRRGGKYGALLMASYNPDKDVFESVCKVGSGFKDEDIDKLPEMLKPYIIEHKHPRVVARMKPDVWVTPALVAEIIGAELTLSPLHTCCLDIIKPGVGISIRFPRFIRWRPDKGPEDATTSQELLEMYKRQLKKLSE.

Glu262 is a binding site for ATP. Catalysis depends on Lys264, which acts as the N6-AMP-lysine intermediate. Residues Arg269, Arg284, Glu314, Phe354, Arg431, and Lys437 each contribute to the ATP site.

This sequence belongs to the ATP-dependent DNA ligase family. Requires Mg(2+) as cofactor. It depends on Mn(2+) as a cofactor.

It carries out the reaction ATP + (deoxyribonucleotide)n-3'-hydroxyl + 5'-phospho-(deoxyribonucleotide)m = (deoxyribonucleotide)n+m + AMP + diphosphate.. The enzyme catalyses ADP + (deoxyribonucleotide)n-3'-hydroxyl + 5'-phospho-(deoxyribonucleotide)m = (deoxyribonucleotide)n+m + AMP + phosphate.. It catalyses the reaction GTP + (deoxyribonucleotide)n-3'-hydroxyl + 5'-phospho-(deoxyribonucleotide)m = (deoxyribonucleotide)n+m + GMP + diphosphate.. With respect to regulation, inhibited by Ca(2+) and Zn(2+). In terms of biological role, DNA ligase that seals nicks in double-stranded DNA during DNA replication, DNA recombination and DNA repair. Can use both ATP and ADP. The polypeptide is DNA ligase (Staphylothermus marinus (strain ATCC 43588 / DSM 3639 / JCM 9404 / F1)).